Reading from the N-terminus, the 178-residue chain is ATP-dependent protease subunit HslV (178 aa).

T7 is an active-site residue. Na(+)-binding residues include G162, C165, and T168.

Belongs to the peptidase T1B family. HslV subfamily. A double ring-shaped homohexamer of HslV is capped on each side by a ring-shaped HslU homohexamer. The assembly of the HslU/HslV complex is dependent on binding of ATP.

It is found in the cytoplasm. It catalyses the reaction ATP-dependent cleavage of peptide bonds with broad specificity.. With respect to regulation, allosterically activated by HslU binding. Functionally, protease subunit of a proteasome-like degradation complex believed to be a general protein degrading machinery. In Burkholderia orbicola (strain AU 1054), this protein is ATP-dependent protease subunit HslV.